A 721-amino-acid chain; its full sequence is MKFGEHLSKSLIRQYSYYYISYDDLKTELEDNLSKNNGQWTQELETDFLESLEIELDKVYTFCKVKHSEVFRRVKEVQEQVQHTVRLLDSNNPPTQLDFEILEEELSDIIADVHDLAKFSRLNYTGFQKIIKKHDKKTGFILKPVFQVRLDSKPFFKENYDELVVKISQLYDIARTSGRPIKGDSSAGGKQQNFVRQTTKYWVHPDNITELKLIILKHLPVLVFNTNKEFEREDSAITSIYFDNENLDLYYGRLRKDEGAEAHRLRWYGGMSTDTIFVERKTHREDWTGEKSVKARFALKERHVNDFLKGKYTVDQVFAKMRKEGKKPMNEIENLEALASEIQYVMLKKKLRPVVRSFYNRTAFQLPGDARVRISLDTELTMVREDNFDGVDRTHKNWRRTDIGVDWPFKQLDDKDICRFPYAVLEVKLQTQLGQEPPEWVRELVGSHLVEPVPKFSKFIHGVATLLNDKVDSIPFWLPQMDVDIRKPPLPTNIEITRPGRSDNEDNDFDEDDEDDAALVAAMTNAPGNSLDIEESVGYGATSAPTSNTNHVVESANAAYYQRKIRNAENPISKKYYEIVAFFDHYFNGDQISKIPKGTTFDTQIRAPPGKTICVPVRVEPKVYFATERTYLSWLSISILLGGVSTTLLTYGSPTAMIGSIGFFITSLAVLIRTVMVYAKRVVNIRLKRAVDYEDKIGPGMVSVFLILSILFSFFCNLVAK.

Positions 1–148 constitute an SPX domain; sequence MKFGEHLSKS…GFILKPVFQV (148 aa). The Cytoplasmic segment spans residues 1–630; that stretch reads MKFGEHLSKS…PKVYFATERT (630 aa). A Glycyl lysine isopeptide (Lys-Gly) (interchain with G-Cter in ubiquitin) cross-link involves residue Lys-75. The segment at 126 to 133 is important for inositol polyphosphate binding; it reads GFQKIIKK. Residues Lys-200, Arg-264, Arg-266, Lys-281, Lys-294, Tyr-359, and Arg-361 each contribute to the ATP site. Glu-426 provides a ligand contact to Mn(2+). Lys-458 is a catalytic residue. The interval 489–512 is disordered; sequence PLPTNIEITRPGRSDNEDNDFDED. The next 2 helical transmembrane spans lie at 631-651 and 652-672; these read YLSW…LLTY and GSPT…AVLI. Over 673 to 699 the chain is Cytoplasmic; that stretch reads RTVMVYAKRVVNIRLKRAVDYEDKIGP. The helical transmembrane segment at 700 to 720 threads the bilayer; sequence GMVSVFLILSILFSFFCNLVA. Residue Lys-721 is a topological domain, vacuolar.

Belongs to the VTC4 family. In terms of assembly, the VTC core complex is an integral membrane heterooligomer composed of the catalytic subunit VTC4 and the accessory subunits VTC1, VTC2 and VTC3. The complex exists in 2 different sub-complexes: VTC1-VTC2-VCT4 and VCT1-VTC3-VTC4. The VCT1-VTC3-VTC4 subcomplex is mostly found on the vacuolar membrane. The VTC1-VTC2-VCT4 subcomplex is observed in the cell periphery, probably ER and nuclear envelope, but localizes to the vacuole under phosphate starvation. Each subunit contains 3 transmembrane helices. VTC1 is a small membrane protein without hydrophilic domain. VTC2, VTC3 and VTC4 are related and have 2 hydrophilic domains that face the cytosol, an N-terminal SPX domain and the central core domain. The central core in VTC4 is the catalytic domain, with the essential catalytic lysine replaced by isoleucine and leucine in VTC2 and VTC3, respectively. The core complex associates with the accessory subunit VTC5. The complex interacts with the v-SNARE NYV1 and with the V(0) subunit of V-ATPase VPH1. It depends on Mn(2+) as a cofactor.

The protein localises to the vacuole membrane. The protein resides in the cytoplasm. It localises to the cell cortex. It is found in the endoplasmic reticulum membrane. Its subcellular location is the cytoplasmic vesicle. The protein localises to the autophagosome membrane. The enzyme catalyses [phosphate](n) + ATP = [phosphate](n+1) + ADP. Activity of the enzyme is Mn(2+)-dependent and enhanced in the presence of pyrophosphate (PPi). Catalytic subunit of the vacuolar transporter chaperone (VTC) complex. The VTC complex acts as a vacuolar polyphosphate polymerase that catalyzes the synthesis of inorganic polyphosphate (polyP) via transfer of phosphate from ATP to a growing polyP chain, releasing ADP. VTC exposes its catalytic domain VTC4 to the cytosol, where the growing polyP chain winds through a tunnel-shaped pocket, integrating cytoplasmic polymer synthesis with polyP membrane translocation. The VTC complex carries 9 vacuolar transmembrane domains, which are likely to constitute the translocation channel into the organelle lumen. PolyP synthesis is tightly coupled to its transport into the vacuole lumen, in order to avoid otherwise toxic intermediates in the cytosol, and it depends on the proton gradient across the membrane, formed by V-ATPase. The VTC complex also plays a role in vacuolar membrane fusion. Required for SEC18/NSF activity in SNARE priming, membrane binding of LMA1 and V(0) trans-complex formation. Binds inositol hexakisphosphate (Ins6P) and similar inositol polyphosphates, such as 5-diphospho-inositol pentakisphosphate (5-InsP7); these are important intracellular signaling molecules. Inositol polyphosphate binding promotes vacuolar polyphosphate synthesis. The VTC complex is required for microautophagy. It is a constituent of autophagic tubes and is required for scission of microautophagic vesicles from these tubes. The polypeptide is Vacuolar transporter chaperone complex subunit 4 (Saccharomyces cerevisiae (strain ATCC 204508 / S288c) (Baker's yeast)).